Here is a 312-residue protein sequence, read N- to C-terminus: Very-long-chain 3-oxoacyl-CoA reductase-like protein At1g24470 (312 aa).

A helical membrane pass occupies residues 14–34 (LHFVCFIGFLFLLRVLFIPLL). 52 to 81 (GSWAMVTGATEGIGRAFAHELAKHGLNLIL) is an NADP(+) binding site. A substrate-binding site is contributed by serine 190. Tyrosine 205 serves as the catalytic Proton acceptor.

It belongs to the short-chain dehydrogenases/reductases (SDR) family. As to expression, expressed in green siliques, flowers, inflorescence stems and leaves. Not detected in roots.

The protein localises to the endoplasmic reticulum membrane. Functionally, probable reductase, but unlike KCR1, has no beta-ketoacyl-coenzyme A reductase activity. This Arabidopsis thaliana (Mouse-ear cress) protein is Very-long-chain 3-oxoacyl-CoA reductase-like protein At1g24470 (KCR2).